Consider the following 264-residue polypeptide: MNRIDERLAALKAAGRKALIPFITAGDPEPDMTVSLMHALVRGGADVIELGIPFSDPMADGPVIQRASERALARGMTLARVLEMVAGFRRTDPDTPVVLMGYLNPVEAMGYAAFASAARAAGVDGVLTVDCPPEESDEYAQVLQSHGLATVFLVAPTTPAARLAAVARLARGYVYYVSIKGVTGAATLDVADVARQVGALREHLSLPVGVGFGIRDAETARAIGEVADAVVIGSRLVQEIEAAGAQAPDRLQALLAGIRQALDA.

Active-site proton acceptor residues include E49 and D60.

The protein belongs to the TrpA family. As to quaternary structure, tetramer of two alpha and two beta chains.

The enzyme catalyses (1S,2R)-1-C-(indol-3-yl)glycerol 3-phosphate + L-serine = D-glyceraldehyde 3-phosphate + L-tryptophan + H2O. It functions in the pathway amino-acid biosynthesis; L-tryptophan biosynthesis; L-tryptophan from chorismate: step 5/5. The alpha subunit is responsible for the aldol cleavage of indoleglycerol phosphate to indole and glyceraldehyde 3-phosphate. The polypeptide is Tryptophan synthase alpha chain (Laribacter hongkongensis (strain HLHK9)).